Here is a 396-residue protein sequence, read N- to C-terminus: Phosphoglycerate kinase (396 aa).

Substrate is bound by residues 23–25 (DFN), Arg-38, 61–64 (HMGK), Arg-122, and Arg-155. Residues Lys-206, Gly-296, Glu-327, and 353–356 (GGDS) contribute to the ATP site.

It belongs to the phosphoglycerate kinase family. In terms of assembly, monomer.

It is found in the cytoplasm. The catalysed reaction is (2R)-3-phosphoglycerate + ATP = (2R)-3-phospho-glyceroyl phosphate + ADP. It participates in carbohydrate degradation; glycolysis; pyruvate from D-glyceraldehyde 3-phosphate: step 2/5. This is Phosphoglycerate kinase from Clostridium botulinum (strain Alaska E43 / Type E3).